The following is a 307-amino-acid chain: Methionyl-tRNA formyltransferase (307 aa).

Residue 108-111 (SLLP) coordinates (6S)-5,6,7,8-tetrahydrofolate.

This sequence belongs to the Fmt family.

The catalysed reaction is L-methionyl-tRNA(fMet) + (6R)-10-formyltetrahydrofolate = N-formyl-L-methionyl-tRNA(fMet) + (6S)-5,6,7,8-tetrahydrofolate + H(+). In terms of biological role, attaches a formyl group to the free amino group of methionyl-tRNA(fMet). The formyl group appears to play a dual role in the initiator identity of N-formylmethionyl-tRNA by promoting its recognition by IF2 and preventing the misappropriation of this tRNA by the elongation apparatus. The chain is Methionyl-tRNA formyltransferase from Renibacterium salmoninarum (strain ATCC 33209 / DSM 20767 / JCM 11484 / NBRC 15589 / NCIMB 2235).